A 139-amino-acid chain; its full sequence is D-ribose pyranase (139 aa).

Residue histidine 20 is the Proton donor of the active site. Residues aspartate 28, histidine 106, and 128-130 contribute to the substrate site; that span reads YAN.

Belongs to the RbsD / FucU family. RbsD subfamily. Homodecamer.

It localises to the cytoplasm. It catalyses the reaction beta-D-ribopyranose = beta-D-ribofuranose. It participates in carbohydrate metabolism; D-ribose degradation; D-ribose 5-phosphate from beta-D-ribopyranose: step 1/2. Catalyzes the interconversion of beta-pyran and beta-furan forms of D-ribose. The chain is D-ribose pyranase from Vibrio parahaemolyticus serotype O3:K6 (strain RIMD 2210633).